The sequence spans 519 residues: Alternative NAD(P)H-ubiquinone oxidoreductase C1, chloroplastic/mitochondrial (519 aa).

The transit peptide at 1–52 (MAVLSSVSSLIPFSYGATRLTSKASLASRTSGFNLSSRWNSTRNSPMLYLSR) directs the protein to the chloroplast and mitochondrion. 82 to 118 (RVCILGGGFGGLYTALRLESLVWPEDKKPQVVLVDQS) provides a ligand contact to FAD. 246-282 (IKVAVVGCGYAGVELAATISERLQDRGIVQSINVSKN) is a binding site for NAD(+).

It belongs to the NADH dehydrogenase family. FAD is required as a cofactor. Flowers, roots, leaves and stems.

The protein localises to the mitochondrion. It is found in the mitochondrion inner membrane. It localises to the plastid. The protein resides in the chloroplast. Its subcellular location is the plastoglobule. It catalyses the reaction a quinone + NADH + H(+) = a quinol + NAD(+). It carries out the reaction a ubiquinone + NADH + H(+) = a ubiquinol + NAD(+). The enzyme catalyses demethylphylloquinone + NADPH + H(+) = demethylphylloquinol + NADP(+). Inhibited by dicumarol. Its function is as follows. Bifunctional oxidoreductase ables to act both on prenyl naphthoquinones and on prenyl benzoquinones. May serve a respiratory function. Involved in an electron flow toward the plastoglobule plastoquinone pool. Required for plastochromanol-8 accumulation and for phylloquinone (vitamin K1) production. Probably not directly involved in cyclic or chlororespiratory electron flows under standard growth conditions, but participates in the redox metabolism of plastoquinone-9 and the tocophrol recycling-intermediate alpha-tocopherol quinone. Catalyzes the penultimate step in the biosynthesis of vitamin K1. This chain is Alternative NAD(P)H-ubiquinone oxidoreductase C1, chloroplastic/mitochondrial, found in Arabidopsis thaliana (Mouse-ear cress).